The primary structure comprises 506 residues: FAD-linked oxidoreductase chry5 (506 aa).

Positions 1-17 are cleaved as a signal peptide; it reads MHLQALTGLATLAVTAA. The FAD-binding PCMH-type domain occupies 59-241; that stretch reads LDKPTVNIVA…TSVTSKTYDA (183 aa). 5 N-linked (GlcNAc...) asparagine glycosylation sites follow: Asn-205, Asn-272, Asn-281, Asn-389, and Asn-431.

It belongs to the oxygen-dependent FAD-linked oxidoreductase family. It depends on FAD as a cofactor.

It participates in pigment biosynthesis. In terms of biological role, FAD-linked oxidoreductase; part of the gene cluster that mediates the biosynthesis of the yellow pigment chrysogine. Pyruvic acid and anthranilic acid are likely substrates for the nonribosomal peptide synthetase chry1/NRPS14, with pyruvic acid adenylated by the first A domain and anthranilic acid by the second. If pyruvic acid and anthranilic acid are merged and released from chry1/NRPS14 by hydrolysis, a subsequent amidation would lead to 2-pyruvoylaminobenzamide. This process is probably catalyzed by the amidotransferase chry2 using glutamine as amino donor. The dehydrogenase chry5 that has a terminal berberine bridge domain for C-N cyclization could catalyze the cyclization of 2-pyruvoylaminobenzamide to yield acetyl-4(3H)-quinazolidinone. A final reduction of acetyl-4(3H)-quinazolidinone catalyzed by the oxidoreductase chry4 would result in chrysogine. This chain is FAD-linked oxidoreductase chry5, found in Gibberella zeae (strain ATCC MYA-4620 / CBS 123657 / FGSC 9075 / NRRL 31084 / PH-1) (Wheat head blight fungus).